Reading from the N-terminus, the 1158-residue chain is MHAFCVGQYLEPDQEGVTIPDLGSLSSPLIDTERNLGLLLGLHASYLAMSTPLSPVEIECAKWLQSSIFSGGLQTSQIHYSYNEEKDEDHCSSPGGTPASKSRLCSHRRALGDHSQAFLQAIADNNIQDHNVKDFLCQIERYCRQCHLTTPIMFPPEHPVEEVGRLLLCCLLKHEDLGHVALSLVHAGALGIEQVKHRTLPKSVVDVCRVVYQAKCSLIKTHQEQGRSYKEVCAPVIERLRFLFNELRPAVCNDLSIMSKFKLLSSLPHWRRIAQKIIREPRKKRVPKKPESTDDEEKIGNEESDLEEACILPHSPINVDKRPIAIKSPKDKWQPLLSTVTGVHKYKWLKQNVQGLYPQSPLLSTIAEFALKEEPVDVEKRKCLLKQLERAEVRLEGIDTILKLYLVSKNFLLPSVPYAMFCGWQRLIPEGIDIGEPLTDCLKDVDLIPPFNRMLLEVTFGKLYAWAVQNIRNVLVDASAKFKELGIQPVPLQTITNENPSGPSLGTIPQAHFLLVMLSMLTLQHSANNLDLLLNSGTLALAQTALRLIGPSCDSVEEDMNASAQGASATVLEETRKETAPVQLPVSGPELAAMMKIGTRVMRGVDWKWGDQDRPPPGLGRVIGELGEDGWIRVQWDTGSTNSYRMGKEGNYDLKLAELPAPAQPSAEDSDTEDDSEAEQTERNIHPTAMMFTSTINLLQTLCLSAGVHAEIMQSEATKTLCGLLQMLVYREQHRSWCTLGFVQSIALTLQVCGTLSSLQWITLLMKVVEGHAPFTATSLQRQILAVHLLQAVLPSWDKTERARDMKCLMEKLFDFLGSLLTMCSSDVPLLRESTLRRRRVCPQASLTATHSSTLAEEVVALLHTLHSLTQWNGLINKYINSQLRSITHSFAGRPSKGAQLEDYFPDSENPEVGGLMAVLAVVGGIDGRLCLGGQVVHDDFGEVTMTRITLKGKITVQFSDMRTCHVCPLNQLKPLPAVAFNVNNLPFTEPMLSVWAQLVNLAGSKLEKHKIKKSTKQAFAGQVDLDLLRCQQLKLYILKAGRALFSHQDKLRQILSQPAVQETGTVHTDDGAVVSPDLGDMSPEGPQPPMILLQQLLASATQPSPVKAIFDKQELEERMSRCCFWRRRTTKLEQILLFIRRMNSVCEKENTNATASN.

The interval 281–302 is disordered; sequence PRKKRVPKKPESTDDEEKIGNE. A compositionally biased stretch (acidic residues) spans 293–302; sequence TDDEEKIGNE. The 74-residue stretch at 587-660 folds into the MIB/HERC2 domain; that stretch reads SGPELAAMMK…NYDLKLAELP (74 aa). The disordered stretch occupies residues 662-684; that stretch reads PAQPSAEDSDTEDDSEAEQTERN. Acidic residues predominate over residues 668-679; it reads EDSDTEDDSEAE.

The chain is Putative HERC2-like protein 3 (HERC2P3) from Homo sapiens (Human).